The primary structure comprises 537 residues: Membrane protein insertase YidC (537 aa).

5 consecutive transmembrane segments (helical) span residues 6-26 (SLLA…WEID), 341-363 (LVSN…LYPL), 411-431 (LGGC…YWTF), 449-469 (LSAQ…MFLL), and 490-510 (PVIF…YWLV).

The protein belongs to the OXA1/ALB3/YidC family. Type 1 subfamily. In terms of assembly, interacts with the Sec translocase complex via SecD. Specifically interacts with transmembrane segments of nascent integral membrane proteins during membrane integration.

The protein localises to the cell inner membrane. Its function is as follows. Required for the insertion and/or proper folding and/or complex formation of integral membrane proteins into the membrane. Involved in integration of membrane proteins that insert both dependently and independently of the Sec translocase complex, as well as at least some lipoproteins. Aids folding of multispanning membrane proteins. The protein is Membrane protein insertase YidC of Actinobacillus succinogenes (strain ATCC 55618 / DSM 22257 / CCUG 43843 / 130Z).